The sequence spans 79 residues: Spidroin-1 (79 aa).

Belongs to the silk fibroin family. As to quaternary structure, major subunit, with spidroin 2, of the dragline silk.

The protein resides in the secreted. It is found in the extracellular space. Spiders' major ampullate silk possesses unique characteristics of strength and elasticity. Fibroin consists of pseudocrystalline regions of antiparallel beta-sheet interspersed with elastic amorphous segments. This chain is Spidroin-1, found in Araneus bicentenarius (Giant lichen orbweaver).